Consider the following 201-residue polypeptide: MELVITGSNNKVSVSEAVFGREFSEDLVHQVVVAYRNAGRAGTKAQKTRSEVAGTTKKSKKQKGGGARHGALTAPIFVGGGVTFAAKPRSFEQKVNRKMYRAAICAIFSELNRQGRLMIVDAFDLEATKTKDLIEKLKGLDVGKRPLIVTEEASEHLYLSARNLPYVQVRDVQGLDPVALVGADTVVITADAVKKVEEWLA.

The segment at 44–68 (KAQKTRSEVAGTTKKSKKQKGGGAR) is disordered.

This sequence belongs to the universal ribosomal protein uL4 family. As to quaternary structure, part of the 50S ribosomal subunit.

Its function is as follows. One of the primary rRNA binding proteins, this protein initially binds near the 5'-end of the 23S rRNA. It is important during the early stages of 50S assembly. It makes multiple contacts with different domains of the 23S rRNA in the assembled 50S subunit and ribosome. In terms of biological role, forms part of the polypeptide exit tunnel. The protein is Large ribosomal subunit protein uL4 of Xanthomonas oryzae pv. oryzae (strain MAFF 311018).